The chain runs to 289 residues: ATP synthase gamma chain (289 aa).

It belongs to the ATPase gamma chain family. As to quaternary structure, F-type ATPases have 2 components, CF(1) - the catalytic core - and CF(0) - the membrane proton channel. CF(1) has five subunits: alpha(3), beta(3), gamma(1), delta(1), epsilon(1). CF(0) has three main subunits: a, b and c.

It localises to the cell inner membrane. Functionally, produces ATP from ADP in the presence of a proton gradient across the membrane. The gamma chain is believed to be important in regulating ATPase activity and the flow of protons through the CF(0) complex. This chain is ATP synthase gamma chain, found in Polynucleobacter asymbioticus (strain DSM 18221 / CIP 109841 / QLW-P1DMWA-1) (Polynucleobacter necessarius subsp. asymbioticus).